Here is a 253-residue protein sequence, read N- to C-terminus: Purine nucleoside phosphorylase DR_1966 (253 aa).

Residues histidine 72, cysteine 106, and histidine 123 each coordinate Zn(2+).

It belongs to the purine nucleoside phosphorylase YfiH/LACC1 family. As to quaternary structure, homodimer. Requires Cu(2+) as cofactor. Zn(2+) is required as a cofactor.

It carries out the reaction adenosine + phosphate = alpha-D-ribose 1-phosphate + adenine. The catalysed reaction is S-methyl-5'-thioadenosine + phosphate = 5-(methylsulfanyl)-alpha-D-ribose 1-phosphate + adenine. The enzyme catalyses inosine + phosphate = alpha-D-ribose 1-phosphate + hypoxanthine. It catalyses the reaction adenosine + H2O + H(+) = inosine + NH4(+). Its function is as follows. Purine nucleoside enzyme that catalyzes the phosphorolysis of adenosine and inosine nucleosides, yielding D-ribose 1-phosphate and the respective free bases, adenine and hypoxanthine. Also catalyzes the phosphorolysis of S-methyl-5'-thioadenosine into adenine and S-methyl-5-thio-alpha-D-ribose 1-phosphate. Also has adenosine deaminase activity. This is Purine nucleoside phosphorylase DR_1966 from Deinococcus radiodurans (strain ATCC 13939 / DSM 20539 / JCM 16871 / CCUG 27074 / LMG 4051 / NBRC 15346 / NCIMB 9279 / VKM B-1422 / R1).